An 814-amino-acid chain; its full sequence is Transcription factor oryO (814 aa).

Disordered stretches follow at residues 1 to 59 and 699 to 723; these read MTAR…PACN and PMDG…SIPP. Polar residues-rich tracts occupy residues 16–27 and 49–59; these read ANPTVRDQTQQD and QPDNTSSPACN. Residues 58–85 constitute a DNA-binding region (zn(2)-C6 fungal-type); it reads CNQCRTRKIRCDRQQPKCSNCRRADVEC. Positions 713–723 are enriched in low complexity; that stretch reads PSESELSSIPP.

It localises to the nucleus. In terms of biological role, transcription factor that regulates the expression of the gene cluster that mediates the biosynthesis of oryzines, natural products with an unusual maleidride backbone. The sequence is that of Transcription factor oryO from Aspergillus oryzae (strain ATCC 42149 / RIB 40) (Yellow koji mold).